We begin with the raw amino-acid sequence, 539 residues long: Heparanase-like protein 2 (539 aa).

Positions 1-21 (MGFNVVVFLSCLLLLPPVTFG) are cleaved as a signal peptide. N-linked (GlcNAc...) asparagine glycosylation is found at Asn-143, Asn-163, and Asn-181. Residue Glu-198 is the Proton donor of the active site. Asn-300 carries an N-linked (GlcNAc...) asparagine glycan. Residue Glu-316 is the Nucleophile of the active site. N-linked (GlcNAc...) asparagine glycosylation is present at Asn-421.

Belongs to the glycosyl hydrolase 79 family.

It is found in the lysosome membrane. Its subcellular location is the secreted. Its function is as follows. Endoglycosidase which is a cell surface and extracellular matrix-degrading enzyme. Cleaves heparan sulfate proteoglycans (HSPGs) into heparan sulfate side chains and core proteoglycans. The protein is Heparanase-like protein 2 of Arabidopsis thaliana (Mouse-ear cress).